Consider the following 448-residue polypeptide: Tapasin (448 aa).

An N-terminal signal peptide occupies residues 1–20 (MKSLSLLLAVALGLATAVSA). At 21 to 414 (GPAVIECWFV…LSGPSLEDSV (394 aa)) the chain is on the lumenal side. The cysteines at positions 27 and 91 are disulfide-linked. The N-linked (GlcNAc...) asparagine glycan is linked to N253. An Ig-like C1-type domain is found at 292–399 (PKVSLMPATL…PASGRSAEVT (108 aa)). An intrachain disulfide couples C315 to C382. The helical transmembrane segment at 415–435 (GLFLSAFLLLGLFKALGWAAV) threads the bilayer. Topologically, residues 436–448 (YLSTCKDSKKKAE) are cytoplasmic.

As to quaternary structure, heterodimer with PDIA3; disulfide-linked. Obligatory mediator for the interaction between newly assembled MHC class I molecules, calreticulin, PDIA3 and TAP. Up to 4 MHC class I/tapasin complexes bind to 1 TAP. Interacts with HLA-G-B2M complex; this interaction is required for loading of high affinity peptides. On its own or as part of MHC class I peptide loading complex, interacts with ligand-free MR1 or MR1-B2M complex, providing for stable MR1 pools ready for metabolite antigen processing. In terms of tissue distribution, neutrophils, mostly in fully differentiated cells.

It localises to the endoplasmic reticulum membrane. Its function is as follows. Involved in the association of MHC class I with transporter associated with antigen processing (TAP) and in the assembly of MHC class I with peptide (peptide loading). In Homo sapiens (Human), this protein is Tapasin.